Reading from the N-terminus, the 206-residue chain is LOB domain-containing protein 35 (206 aa).

The 102-residue stretch at 4-105 (TCCSACKVMK…EQINSAKNEL (102 aa)) folds into the LOB domain. The tract at residues 184–206 (ASTSGGTSATQKTLPFPQNHNQP) is disordered.

It belongs to the LOB domain-containing protein family.

The polypeptide is LOB domain-containing protein 35 (LBD35) (Arabidopsis thaliana (Mouse-ear cress)).